The chain runs to 329 residues: MVKTQRVVITPGEPAGIGPDLVVQLAQREWPVELVVCADATLLTDRAAMLGLPLTLRPYSPNSPAQPQTAGTLTLLPVALRESVTAGQLAVENGHYVVETLARACDGCLNGEFAALITGPVHKGVINDAGIPFTGHTEFFEERSQAKKVVMMLATEELRVALATTHLPLRDIADAITPALLHEVIAILHHDLRTKFGIAEPRILVCGLNPHAGEGGHMGTEEIDTIIPVLDELRVQGMKLKGPLPADTLFQPKYLDNADAVLAMYHDQGLPVLKYQGFGRGVNITLGLPFIRTSVDHGTALELAGRGKADVGSFITALNLAIKMIVNTQ.

Histidine 136 and threonine 137 together coordinate substrate. A divalent metal cation-binding residues include histidine 166, histidine 211, and histidine 266. The substrate site is built by lysine 274, asparagine 283, and arginine 292.

It belongs to the PdxA family. As to quaternary structure, homodimer. It depends on Zn(2+) as a cofactor. Requires Mg(2+) as cofactor. Co(2+) serves as cofactor.

The protein resides in the cytoplasm. The enzyme catalyses 4-(phosphooxy)-L-threonine + NAD(+) = 3-amino-2-oxopropyl phosphate + CO2 + NADH. It participates in cofactor biosynthesis; pyridoxine 5'-phosphate biosynthesis; pyridoxine 5'-phosphate from D-erythrose 4-phosphate: step 4/5. Its function is as follows. Catalyzes the NAD(P)-dependent oxidation of 4-(phosphooxy)-L-threonine (HTP) into 2-amino-3-oxo-4-(phosphooxy)butyric acid which spontaneously decarboxylates to form 3-amino-2-oxopropyl phosphate (AHAP). This Escherichia fergusonii (strain ATCC 35469 / DSM 13698 / CCUG 18766 / IAM 14443 / JCM 21226 / LMG 7866 / NBRC 102419 / NCTC 12128 / CDC 0568-73) protein is 4-hydroxythreonine-4-phosphate dehydrogenase.